A 231-amino-acid chain; its full sequence is MFDISREQQNMLEKNKDCVITFETNRERITIENTNIKDILSDRRIHIFALCITSDNIPIIGIRRTSFMYQSVISKRRSFSEILAVDINHLKYMYNNEIKEICIRSIVPFTYSGFNNFEELVLLGGRVKNKESIYQCLSRELSEESDGILTIKTFGNKILKLTIEDKILRRTFYGYCIVCFIDQLYSEIIKPLYNIEIKELGSLFDRSSNEKYEYLHFIYNTLLTYKYGGVL.

Residues 74–217 (SKRRSFSEIL…SNEKYEYLHF (144 aa)) form the Nudix hydrolase domain. Residues 125-146 (GRVKNKESIYQCLSRELSEESD) carry the Nudix box motif. Residue glutamate 131 coordinates Mg(2+). Glutamate 140 serves as the catalytic Nucleophile. 2 residues coordinate Mg(2+): glutamate 144 and aspartate 165.

Belongs to the Nudix hydrolase family. Mg(2+) serves as cofactor. It depends on Mn(2+) as a cofactor.

In terms of biological role, decapping enzyme required for the removal of the 5'-end m7GpppN cap tethered to viral and host mRNAs to allow their decay in cells. May therefore accelerate viral and cellular mRNA turnover to eliminate competing host mRNAs and allow stage-specific synthesis of viral proteins. Acceleration of the turnover of cellular transcripts may even promote the shutoff of host protein synthesis. Does not cleave unmethylated RNAs or RNAs shorter than 24 nucleotides. The sequence is that of Putative Nudix hydrolase FPV054 from Vertebrata (FPV).